A 176-amino-acid chain; its full sequence is Sec-independent protein translocase protein TatB (176 aa).

The chain crosses the membrane as a helical span at residues 1–21; that stretch reads MLDLGLSKMALIGVVALVVLG. Positions 155-176 are disordered; the sequence is QSGAARVARHQPASLRRPTRFL.

Belongs to the TatB family. In terms of assembly, the Tat system comprises two distinct complexes: a TatABC complex, containing multiple copies of TatA, TatB and TatC subunits, and a separate TatA complex, containing only TatA subunits. Substrates initially bind to the TatABC complex, which probably triggers association of the separate TatA complex to form the active translocon.

It is found in the cell inner membrane. In terms of biological role, part of the twin-arginine translocation (Tat) system that transports large folded proteins containing a characteristic twin-arginine motif in their signal peptide across membranes. Together with TatC, TatB is part of a receptor directly interacting with Tat signal peptides. TatB may form an oligomeric binding site that transiently accommodates folded Tat precursor proteins before their translocation. This is Sec-independent protein translocase protein TatB from Burkholderia ambifaria (strain ATCC BAA-244 / DSM 16087 / CCUG 44356 / LMG 19182 / AMMD) (Burkholderia cepacia (strain AMMD)).